The following is a 201-amino-acid chain: uncharacterized protein (201 aa).

The next 4 helical transmembrane spans lie at 9-29 (YNVF…ILVA), 42-62 (FLFV…FFDV), 86-106 (SGVI…VVMV), and 126-146 (LPYL…SIGM). 2 stretches are compositionally biased toward basic and acidic residues: residues 165–174 (EPTDPNKTDN) and 182–191 (DENKKNEKEQ). Residues 165-201 (EPTDPNKTDNRAVVINLDENKKNEKEQSPPSAEMTSL) are disordered. The segment covering 192–201 (SPPSAEMTSL) has biased composition (polar residues).

It is found in the cell membrane. This is an uncharacterized protein from Mycoplasma genitalium (strain ATCC 33530 / DSM 19775 / NCTC 10195 / G37) (Mycoplasmoides genitalium).